The primary structure comprises 113 residues: MNTMEIEKTNRMNALFEFYAALLTDKQMNYIELYYADDYSLAEIADEFGVSRQAVYDNIKRTEKILETYEMKLHMYSDYVVRSEIFDDMIAHYPHDEYLQEKISILTSIDNRE.

It belongs to the UPF0122 family.

Its function is as follows. Might take part in the signal recognition particle (SRP) pathway. This is inferred from the conservation of its genetic proximity to ftsY/ffh. May be a regulatory protein. The protein is UPF0122 protein M6_Spy0905 of Streptococcus pyogenes serotype M6 (strain ATCC BAA-946 / MGAS10394).